A 78-amino-acid chain; its full sequence is Large ribosomal subunit protein bL28 (78 aa).

It belongs to the bacterial ribosomal protein bL28 family.

In Synechococcus sp. (strain CC9605), this protein is Large ribosomal subunit protein bL28.